A 303-amino-acid polypeptide reads, in one-letter code: tRNA pseudouridine synthase B (303 aa).

Catalysis depends on Asp53, which acts as the Nucleophile.

It belongs to the pseudouridine synthase TruB family. Type 1 subfamily.

It carries out the reaction uridine(55) in tRNA = pseudouridine(55) in tRNA. In terms of biological role, responsible for synthesis of pseudouridine from uracil-55 in the psi GC loop of transfer RNAs. In Zymomonas mobilis subsp. mobilis (strain ATCC 31821 / ZM4 / CP4), this protein is tRNA pseudouridine synthase B.